We begin with the raw amino-acid sequence, 307 residues long: Acetaldehyde dehydrogenase 2 (307 aa).

13-16 is an NAD(+) binding site; that stretch reads SGNI. Cys132 acts as the Acyl-thioester intermediate in catalysis. Residues 163-171 and Asn274 contribute to the NAD(+) site; that span reads SIGPGTRAN.

This sequence belongs to the acetaldehyde dehydrogenase family.

The catalysed reaction is acetaldehyde + NAD(+) + CoA = acetyl-CoA + NADH + H(+). This is Acetaldehyde dehydrogenase 2 from Methylibium petroleiphilum (strain ATCC BAA-1232 / LMG 22953 / PM1).